Here is a 218-residue protein sequence, read N- to C-terminus: MNSSLQISKKRKFVADGVFHAELNELFTREFNKDEGYSGVELKTSPGLTEIIIRASKTQAVVGPNARRIQELCSLVQKRFNFKEGTVVLFAEKILNRGLCAVAQAESLKLKLLAGLPVRKACYAIVHQIMTRGAKGCEVIVSGKLRAQRAKSMKFRDGYMIKSGQPSKDFIDFACRHVLLRQGTLGVKVAIMLPYDETRKIHGACNIPQPDVVVIRDA.

Met1 carries the N-acetylmethionine modification. The region spanning 23 to 95 (LNELFTREFN…TVVLFAEKIL (73 aa)) is the KH type-2 domain.

This sequence belongs to the universal ribosomal protein uS3 family.

The chain is Small ribosomal subunit protein uS3 (rps3) from Dictyostelium discoideum (Social amoeba).